Reading from the N-terminus, the 367-residue chain is MRRNWLLILTLFLLMFIEKYESTVSLTAPPTVKLENGSSTNVDITLGHPLNSTLVITFEVTFRSKNLTIVELPDEVIVPRGEKNASFQVTSQNIGQVTVFLHGNHSNQTCPRIRFLVIHSRIVSIINQVIGWIYFMAWSVSFYPQVIQNWRRKSVIGLSFDFLALNLTGFVAYSVFNIGLLWVPYIQEEFLLKYPNGVNPVDSNDAFFSLHAVALTLIVILQCCLYERGNQRVSWPSIGFLVLAWLFVLVTMIVAAVGITTWLQFLFCFSYIKLIITLIKYFPQAYMNFYYKSTKGWSIGGVLLDFTGGSFSLLQMFLQSYNNDQWTLIFGDPTKFGLGVFTIFFDVVFFIQHFYLYRKKPGYDQLN.

The N-terminal stretch at 1–22 (MRRNWLLILTLFLLMFIEKYES) is a signal peptide. The Lumenal segment spans residues 23–125 (TVSLTAPPTV…LVIHSRIVSI (103 aa)). N-linked (GlcNAc...) asparagine glycans are attached at residues Asn36, Asn51, Asn66, Asn84, Asn104, and Asn107. Residues 123-189 (VSIINQVIGW…LLWVPYIQEE (67 aa)) enclose the PQ-loop 1 domain. Residues 126 to 150 (INQVIGWIYFMAWSVSFYPQVIQNW) traverse the membrane as a helical segment. Residues 151–159 (RRKSVIGLS) are Cytoplasmic-facing. A helical membrane pass occupies residues 160 to 179 (FDFLALNLTGFVAYSVFNIG). L-cystine is bound at residue Asn166. At 180–202 (LLWVPYIQEEFLLKYPNGVNPVD) the chain is on the lumenal side. Residues 203-225 (SNDAFFSLHAVALTLIVILQCCL) traverse the membrane as a helical segment. Asp205 lines the H(+) pocket. The Cytoplasmic segment spans residues 226–234 (YERGNQRVS). The chain crosses the membrane as a helical span at residues 235–257 (WPSIGFLVLAWLFVLVTMIVAAV). The Lumenal portion of the chain corresponds to 258–263 (GITTWL). Residues 263–328 (LQFLFCFSYI…QSYNNDQWTL (66 aa)) enclose the PQ-loop 2 domain. The helical transmembrane segment at 264 to 289 (QFLFCFSYIKLIITLIKYFPQAYMNF) threads the bilayer. L-cystine is bound by residues Lys273, Lys280, and Tyr281. The Cytoplasmic segment spans residues 290 to 298 (YYKSTKGWS). The helical transmembrane segment at 299-308 (IGGVLLDFTG) threads the bilayer. Residue Asp305 coordinates L-cystine. H(+) is bound at residue Asp305. The Lumenal segment spans residues 309 to 331 (GSFSLLQMFLQSYNNDQWTLIFG). Residues 332 to 354 (DPTKFGLGVFTIFFDVVFFIQHF) traverse the membrane as a helical segment. Residue Asp346 coordinates H(+). Topologically, residues 355–367 (YLYRKKPGYDQLN) are cytoplasmic. A Lysosomal targeting motif motif is present at residues 362 to 366 (GYDQL).

Belongs to the cystinosin family. As to quaternary structure, interacts with components of the V-ATPase complex. Interacts with components of the Ragulator complex. Interacts with RRAGA/RagA and RRAGC/RagC. Interacts with AP-3 complex subunit mu (AP3M1 or AP3M2).

It is found in the lysosome membrane. The protein localises to the melanosome membrane. The enzyme catalyses L-cystine(out) + H(+)(out) = L-cystine(in) + H(+)(in). With respect to regulation, switches between a lumen- and a cytosol-open conformation: pH induces conformational changes and shifts the equilibrium to facilitate the transition between the lumen- and cytosol-open conformation, thereby promoting cystine transport. Protonation of specific aspartate residues (Asp-205, Asp-305 and Asp-346) favors the cytosol-open conformation. In terms of biological role, cystine/H(+) symporter that mediates export of cystine, the oxidized dimer of cysteine, from lysosomes. Plays an important role in melanin synthesis by catalyzing cystine export from melanosomes, possibly by inhibiting pheomelanin synthesis. In addition to cystine export, also acts as a positive regulator of mTORC1 signaling in kidney proximal tubular cells, via interactions with components of the v-ATPase and Ragulator complexes. Also involved in small GTPase-regulated vesicle trafficking and lysosomal localization of LAMP2A, independently of cystine transporter activity. The chain is Cystinosin from Mus musculus (Mouse).